A 145-amino-acid polypeptide reads, in one-letter code: Large ribosomal subunit protein bL19 (145 aa).

Positions 112–130 are enriched in basic and acidic residues; that stretch reads GKSARIKERRPAKAVEKTS. A disordered region spans residues 112-145; the sequence is GKSARIKERRPAKAVEKTSKPASAKKPAAKANKK.

Belongs to the bacterial ribosomal protein bL19 family.

This protein is located at the 30S-50S ribosomal subunit interface and may play a role in the structure and function of the aminoacyl-tRNA binding site. This Malacoplasma penetrans (strain HF-2) (Mycoplasma penetrans) protein is Large ribosomal subunit protein bL19.